Here is a 222-residue protein sequence, read N- to C-terminus: Probable transaldolase (222 aa).

Catalysis depends on Lys-91, which acts as the Schiff-base intermediate with substrate.

It belongs to the transaldolase family. Type 3B subfamily.

Its subcellular location is the cytoplasm. The catalysed reaction is D-sedoheptulose 7-phosphate + D-glyceraldehyde 3-phosphate = D-erythrose 4-phosphate + beta-D-fructose 6-phosphate. Its pathway is carbohydrate degradation; pentose phosphate pathway; D-glyceraldehyde 3-phosphate and beta-D-fructose 6-phosphate from D-ribose 5-phosphate and D-xylulose 5-phosphate (non-oxidative stage): step 2/3. Functionally, transaldolase is important for the balance of metabolites in the pentose-phosphate pathway. The chain is Probable transaldolase from Chlorobium phaeovibrioides (strain DSM 265 / 1930) (Prosthecochloris vibrioformis (strain DSM 265)).